Here is a 279-residue protein sequence, read N- to C-terminus: RRP15-like protein (279 aa).

Disordered stretches follow at residues Met-1 to Ala-40, Gly-56 to Arg-120, and Lys-200 to Asp-279. The span at Lys-73 to Phe-83 shows a compositional bias: basic and acidic residues. 2 stretches are compositionally biased toward acidic residues: residues Lys-93 to Asp-104 and Gln-213 to Ala-224. Residues Lys-232–Thr-245 are compositionally biased toward basic and acidic residues. Positions Asp-267–Asp-279 are enriched in acidic residues.

Belongs to the RRP15 family.

The protein is RRP15-like protein of Drosophila pseudoobscura pseudoobscura (Fruit fly).